Consider the following 688-residue polypeptide: Glycine--tRNA ligase beta subunit (688 aa).

This sequence belongs to the class-II aminoacyl-tRNA synthetase family. As to quaternary structure, tetramer of two alpha and two beta subunits.

The protein localises to the cytoplasm. The catalysed reaction is tRNA(Gly) + glycine + ATP = glycyl-tRNA(Gly) + AMP + diphosphate. This chain is Glycine--tRNA ligase beta subunit, found in Syntrophotalea carbinolica (strain DSM 2380 / NBRC 103641 / GraBd1) (Pelobacter carbinolicus).